The following is a 359-amino-acid chain: Glyceraldehyde-3-phosphate dehydrogenase, glycosomal (359 aa).

Residues Arg12 to Ile13, Asp38, Gln91, and Ser134 contribute to the NAD(+) site. Residues Ser165–Thr167, Thr197, Thr226–Gly227, and Arg249 contribute to the D-glyceraldehyde 3-phosphate site. Cys166 serves as the catalytic Nucleophile. Asn335 provides a ligand contact to NAD(+). The short motif at Ala357 to Leu359 is the Microbody targeting signal element.

It belongs to the glyceraldehyde-3-phosphate dehydrogenase family. As to quaternary structure, homotetramer.

It is found in the glycosome. The catalysed reaction is D-glyceraldehyde 3-phosphate + phosphate + NAD(+) = (2R)-3-phospho-glyceroyl phosphate + NADH + H(+). It participates in carbohydrate degradation; glycolysis; pyruvate from D-glyceraldehyde 3-phosphate: step 1/5. The protein is Glyceraldehyde-3-phosphate dehydrogenase, glycosomal of Trypanosoma cruzi.